Reading from the N-terminus, the 235-residue chain is Probable 2-phosphosulfolactate phosphatase (235 aa).

This sequence belongs to the ComB family. Requires Mg(2+) as cofactor.

It carries out the reaction (2R)-O-phospho-3-sulfolactate + H2O = (2R)-3-sulfolactate + phosphate. The protein is Probable 2-phosphosulfolactate phosphatase of Clostridium novyi (strain NT).